Reading from the N-terminus, the 560-residue chain is Arginine--tRNA ligase (560 aa).

Residues 135–145 carry the 'HIGH' region motif; sequence ANPTGLLHMGN.

The protein belongs to the class-I aminoacyl-tRNA synthetase family. As to quaternary structure, monomer.

Its subcellular location is the cytoplasm. It catalyses the reaction tRNA(Arg) + L-arginine + ATP = L-arginyl-tRNA(Arg) + AMP + diphosphate. The sequence is that of Arginine--tRNA ligase from Moorella thermoacetica (strain ATCC 39073 / JCM 9320).